We begin with the raw amino-acid sequence, 132 residues long: Large ribosomal subunit protein uL14 (132 aa).

This sequence belongs to the universal ribosomal protein uL14 family. As to quaternary structure, the L3/L14/L24e cluster may contact the 16S rRNA in 2 intersubunit bridges. Part of the 50S ribosomal subunit. Forms a cluster with proteins L3 and L24e.

Forms part of two intersubunit bridges in the 70S ribosome. Binds to 23S rRNA. In Haloarcula marismortui (strain ATCC 43049 / DSM 3752 / JCM 8966 / VKM B-1809) (Halobacterium marismortui), this protein is Large ribosomal subunit protein uL14.